The sequence spans 284 residues: uncharacterized protein (284 aa).

To E.coli YnjA.

This is an uncharacterized protein from Mycobacterium tuberculosis (strain CDC 1551 / Oshkosh).